Consider the following 234-residue polypeptide: Proteasome subunit alpha type-6 (234 aa).

Phosphoserine is present on Ser14. A Glycyl lysine isopeptide (Lys-Gly) (interchain with G-Cter in ubiquitin) cross-link involves residue Lys191.

This sequence belongs to the peptidase T1A family. The 26S proteasome consists of a 20S proteasome core and two 19S regulatory subunits. The 20S proteasome core is composed of 28 subunits that are arranged in four stacked rings, resulting in a barrel-shaped structure. The two end rings are each formed by seven alpha subunits, and the two central rings are each formed by seven beta subunits. The catalytic chamber with the active sites is on the inside of the barrel.

Its subcellular location is the cytoplasm. It is found in the nucleus. Its function is as follows. The proteasome degrades poly-ubiquitinated proteins in the cytoplasm and in the nucleus. It is essential for the regulated turnover of proteins and for the removal of misfolded proteins. The proteasome is a multicatalytic proteinase complex that is characterized by its ability to cleave peptides with Arg, Phe, Tyr, Leu, and Glu adjacent to the leaving group at neutral or slightly basic pH. It has an ATP-dependent proteolytic activity. This chain is Proteasome subunit alpha type-6 (PRE5), found in Saccharomyces cerevisiae (strain ATCC 204508 / S288c) (Baker's yeast).